Reading from the N-terminus, the 535-residue chain is EH domain-containing protein 3 (535 aa).

Residue Met1 is modified to N-acetylmethionine. Positions 55 to 286 constitute a Dynamin-type G domain; it reads FDNKPMVLLV…DLFRDIQSLP (232 aa). Positions 65–72 are G1 motif; the sequence is GQYSTGKT. 65 to 72 contacts ATP; that stretch reads GQYSTGKT. Residues 91 to 92 form a G2 motif region; it reads EP. Residues 153 to 156 are G3 motif; it reads DTPG. Residues 198–227 adopt a coiled-coil conformation; sequence DEFSEVIKALKNHEDKMRVVLNKADQIETQ. A G4 motif region spans residues 219–222; sequence NKAD. Lys220 is a binding site for ATP. Position 243 (Ile243) is a region of interest, G5 motif. An ATP-binding site is contributed by Trp258. A Glycyl lysine isopeptide (Lys-Gly) (interchain with G-Cter in SUMO) cross-link involves residue Lys315. 2 positions are modified to phosphoserine: Ser349 and Ser456. The 89-residue stretch at 444–532 folds into the EH domain; the sequence is DKPMYDEIFY…AHLLPPSKRK (89 aa). An EF-hand domain is found at 476–511; that stretch reads LPNSVLGKIWKLADIDKDGMLDDEEFALANHLIKVK. Residues Asp489, Asp491, Asp493, Met495, and Glu500 each contribute to the Ca(2+) site. Lys511 is covalently cross-linked (Glycyl lysine isopeptide (Lys-Gly) (interchain with G-Cter in SUMO)).

It belongs to the TRAFAC class dynamin-like GTPase superfamily. Dynamin/Fzo/YdjA family. EHD subfamily. Homooligomer. Heterooligomer with EHD1. Heterooligomer with EHD2 and EHD4; ATP-binding is required for heterooligomerization. Interacts with PACSIN1. Interacts with PACSIN2. Interacts (via EH domain) with MICALL1. Interacts (via EH domain) with RAB11FIP2. Interacts with ANK2. Interacts with CACNA1GG and CACNA1H. Strong expression seen in the kidney, brain and liver. In the kidney, expressed exclusively by glomerular endothelial cells; at protein level. Expressed in skeletal muscle neuromuscular junction perisynaptic region; at protein level.

Its subcellular location is the recycling endosome membrane. The protein localises to the cell membrane. The protein resides in the cell projection. It is found in the cilium membrane. It localises to the cytoplasmic vesicle. In terms of biological role, ATP- and membrane-binding protein that controls membrane reorganization/tubulation upon ATP hydrolysis. In vitro causes tubulation of endocytic membranes. Binding to phosphatidic acid induces its membrane tubulation activity. Plays a role in endocytic transport. Involved in early endosome to recycling endosome compartment (ERC), retrograde early endosome to Golgi, and endosome to plasma membrane (rapid recycling) protein transport. Involved in the regulation of Golgi maintenance and morphology. Involved in the recycling of internalized D1 dopamine receptor. Plays a role in cardiac protein trafficking probably implicating ANK2. Involved in the ventricular membrane targeting of SLC8A1 and CACNA1C and probably the atrial membrane localization of CACNA1GG and CACNA1H implicated in the regulation of atrial myocyte excitability and cardiac conduction. In conjunction with EHD4 may be involved in endocytic trafficking of KDR/VEGFR2 implicated in control of glomerular function. Involved in the rapid recycling of integrin beta-3 implicated in cell adhesion maintenance. Involved in the unidirectional retrograde dendritic transport of endocytosed BACE1 and in efficient sorting of BACE1 to axons implicating a function in neuronal APP processing. Plays a role in the formation of the ciliary vesicle, an early step in cilium biogenesis; possibly sharing redundant functions with Ehd1. The polypeptide is EH domain-containing protein 3 (Mus musculus (Mouse)).